The sequence spans 383 residues: Microtubule-associated protein tau (383 aa).

Residues 1-27 (MAEPRQEFDVMEDHAGTYGLGDRKDQE) are compositionally biased toward basic and acidic residues. The segment at 1–198 (MAEPRQEFDV…PVPMPDLKNV (198 aa)) is disordered. At Ala2 the chain carries N-acetylalanine. Phosphotyrosine is present on residues Tyr18 and Tyr29. Residue Lys44 forms a Glycyl lysine isopeptide (Lys-Gly) (interchain with G-Cter in ubiquitin) linkage. Thr53 carries the post-translational modification Phosphothreonine. Residues 72–91 (KSKDGTGSDDKKAKGADGKT) are compositionally biased toward basic and acidic residues. Position 95 is a phosphothreonine (Thr95). An Omega-N-methylarginine modification is found at Arg97. Position 105 is an N6,N6-dimethyllysine; alternate (Lys105). N6-acetyllysine; alternate is present on Lys105. A phosphothreonine mark is found at Thr111, Thr117, and Thr123. A compositionally biased stretch (pro residues) spans 116–128 (KTPPAPKTPPSSG). Phosphoserine is present on residues Ser127, Ser133, and Ser137. A compositionally biased stretch (low complexity) spans 129 to 156 (EPPKSGDRSGYSSPGSPGTPGSRSRTPS). At Tyr139 the chain carries Phosphotyrosine. 3 positions are modified to phosphoserine: Ser140, Ser141, and Ser144. Phosphothreonine occurs at positions 147 and 154. A Phosphoserine modification is found at Ser156. The residue at position 159 (Thr159) is a Phosphothreonine. Lys167 carries the post-translational modification N6-acetyllysine. Thr173 bears the Phosphothreonine mark. Phosphoserine occurs at positions 177 and 179. 4 Tau/MAP repeats span residues 186-216 (QTAPVPMPDLKNVKSKIGSTENLKHQPGGGK), 217-247 (VQIINKKLDLSNVQSKCGSKDNIKHVPGGGS), 248-278 (VQIVYKPVDLSKVTSKCGSLGNIHHKPGGGQ), and 279-310 (VEVKSEKLDFKDRVQSKIGSLDNITHVPGGGN). Residue Lys196 forms a Glycyl lysine isopeptide (Lys-Gly) (interchain with G-Cter in ubiquitin) linkage. Position 201 is an N6-acetyllysine; alternate (Lys201). Lys201 carries the post-translational modification N6-methyllysine; alternate. Lys201 is covalently cross-linked (Glycyl lysine isopeptide (Lys-Gly) (interchain with G-Cter in ubiquitin); alternate). Ser204 carries the phosphoserine modification. Residue Lys209 forms a Glycyl lysine isopeptide (Lys-Gly) (interchain with G-Cter in ubiquitin) linkage. Position 223 is an N6-acetyllysine; alternate (Lys223). Lys223 is covalently cross-linked (Glycyl lysine isopeptide (Lys-Gly) (interchain with G-Cter in ubiquitin); alternate). Residues Ser227 and Ser231 each carry the phosphoserine modification. Lys232 carries the post-translational modification N6-acetyllysine. A disulfide bridge links Cys233 with Cys264. Ser235 is modified (phosphoserine). Lys240 carries the N6-acetyllysine; alternate modification. Lys240 participates in a covalent cross-link: Glycyl lysine isopeptide (Lys-Gly) (interchain with G-Cter in ubiquitin); alternate. Position 247 is a phosphoserine (Ser247). Residue Lys253 is modified to N6,N6-dimethyllysine; alternate. N6-acetyllysine; alternate occurs at positions 253, 259, and 263. Residues Lys253, Lys259, and Lys263 each participate in a glycyl lysine isopeptide (Lys-Gly) (interchain with G-Cter in ubiquitin); alternate cross-link. Ser266 bears the Phosphoserine mark. An N6-acetyllysine; alternate mark is found at Lys273, Lys285, and Lys289. Glycyl lysine isopeptide (Lys-Gly) (interchain with G-Cter in ubiquitin); alternate cross-links involve residues Lys273, Lys285, and Lys289. An Omega-N-methylarginine modification is found at Arg291. A Phosphoserine modification is found at Ser294. A Glycyl lysine isopeptide (Lys-Gly) (interchain with G-Cter in ubiquitin) cross-link involves residue Lys295. Ser298 bears the Phosphoserine mark. Lys311 is modified (N6-acetyllysine; alternate). Lys311 is covalently cross-linked (Glycyl lysine isopeptide (Lys-Gly) (interchain with G-Cter in ubiquitin); alternate). A Glycyl lysine isopeptide (Lys-Gly) (interchain with G-Cter in ubiquitin) cross-link involves residue Lys317. Position 327 is an N6-acetyllysine; alternate (Lys327). Residue Lys327 forms a Glycyl lysine isopeptide (Lys-Gly) (interchain with G-Cter in ubiquitin); alternate linkage. A Phosphotyrosine modification is found at Tyr336. A phosphoserine mark is found at Ser338 and Ser342. Positions 340-359 (VVSGDTSPRHLSNVSSTGSI) are disordered. Over residues 343-358 (GDTSPRHLSNVSSTGS) the composition is skewed to polar residues. At Thr345 the chain carries Phosphothreonine. 4 positions are modified to phosphoserine: Ser346, Ser351, Ser358, and Ser364. Thr369 bears the Phosphothreonine mark.

In terms of assembly, interacts with MARK1, MARK2, MARK3 and MARK4. Interacts with SQSTM1 when polyubiquitinated. Interacts with PSMC2 through SQSTM1. Interacts with FKBP4. Binds to CSNK1D. Interacts with SGK1. Interacts with PIN1. Interacts with LRRK2. Interacts with LRP1, leading to endocytosis; this interaction is reduced in the presence of LRPAP1/RAP. In terms of processing, polyubiquitinated. Requires functional TRAF6 and may provoke SQSTM1-dependent degradation by the proteasome. Phosphorylation at various serine and threonine residues in S-P or T-P motifs by proline-directed protein kinases (PDPK1, CDK1, CDK5, GSK3, MAPK) (a few sites per protein in interphase, more in mitosis), and at serine residues in K-X-G-S motifs by MAP/microtubule affinity-regulating kinase (MARK1, MARK2, MARK3 or MARK4), causing detachment from microtubules, and their disassembly. Phosphorylation at Ser-204 by BRSK1 and BRSK2 in neurons affects ability to bind microtubules and plays a role in neuron polarization. Phosphorylated by PHK. Dephosphorylation at several serine and threonine residues by the serine/threonine phosphatase PPP5C. As to expression, expressed in neurons.

The protein localises to the cytoplasm. The protein resides in the cytosol. It is found in the cell membrane. Its subcellular location is the cytoskeleton. It localises to the cell projection. The protein localises to the axon. The protein resides in the dendrite. In terms of biological role, promotes microtubule assembly and stability, and might be involved in the establishment and maintenance of neuronal polarity. The C-terminus binds axonal microtubules while the N-terminus binds neural plasma membrane components, suggesting that tau functions as a linker protein between both. Axonal polarity is predetermined by tau localization (in the neuronal cell) in the domain of the cell body defined by the centrosome. The sequence is that of Microtubule-associated protein tau (MAPT) from Papio hamadryas (Hamadryas baboon).